The chain runs to 604 residues: Putative O-acetyltransferase SACOL0978 (604 aa).

11 helical membrane passes run 15 to 35 (YIPGLDGLRAIAVLGIIIYHL), 43 to 63 (GFLGVDTFFVISGYLITSLLL), 85 to 105 (LLPAVIVLLMVVGTATLLLKS), 150 to 170 (AIEEQFYIFFPVILVTLLLTI), 176 to 196 (IGFIFWGVSIISLGLMMFIYS), 212 to 232 (LQTLLLGVILAFLWPPFKLKN), 240 to 260 (YVIDSIGSLSFIVLILLFFII), 267 to 287 (IYDGGFYLISILTLFIIASVV), 310 to 330 (YSLYLWHFAVISFVHSYYVDG), 332 to 352 (IPVYVYFIDISLTIIFAELSY), and 377 to 397 (FIRMAIVVTLLIPFMLILVGA). Residues serine 459, aspartate 581, and histidine 584 contribute to the active site.

The protein belongs to the acyltransferase 3 family.

It is found in the cell membrane. The protein is Putative O-acetyltransferase SACOL0978 of Staphylococcus aureus (strain COL).